The following is a 252-amino-acid chain: Nicotinamide/nicotinic acid mononucleotide adenylyltransferase 3 (252 aa).

The NAD(+) site is built by Ser-14 and Phe-15. ATP-binding residues include His-22 and Lys-56. Trp-90, Thr-93, Gly-135, and Asp-137 together coordinate NAD(+). Residue Lys-140 coordinates ATP. NAD(+) is bound by residues Leu-147, Trp-148, Arg-167, and Asn-198. 203–206 (TYIR) lines the ATP pocket.

Belongs to the eukaryotic NMN adenylyltransferase family. In terms of assembly, homotetramer. Requires Mg(2+) as cofactor. Expressed in lung and spleen with lower levels in placenta and kidney.

The protein localises to the mitochondrion. It catalyses the reaction beta-nicotinamide D-ribonucleotide + ATP + H(+) = diphosphate + NAD(+). The catalysed reaction is nicotinate beta-D-ribonucleotide + ATP + H(+) = deamido-NAD(+) + diphosphate. The protein operates within cofactor biosynthesis; NAD(+) biosynthesis; NAD(+) from nicotinamide D-ribonucleotide: step 1/1. Its pathway is cofactor biosynthesis; NAD(+) biosynthesis; deamido-NAD(+) from nicotinate D-ribonucleotide: step 1/1. Its activity is regulated as follows. Activity is strongly inhibited by galotannin. Inhibited by P1-(adenosine-5')-P4-(nicotinic-acid-riboside-5')-tetraphosphate (Nap4AD). In terms of biological role, catalyzes the formation of NAD(+) from nicotinamide mononucleotide (NMN) and ATP. Can also use the deamidated form; nicotinic acid mononucleotide (NaMN) as substrate with the same efficiency. Can use triazofurin monophosphate (TrMP) as substrate. Can also use GTP and ITP as nucleotide donors. Also catalyzes the reverse reaction, i.e. the pyrophosphorolytic cleavage of NAD(+). For the pyrophosphorolytic activity, can use NAD(+), NADH, NaAD, nicotinic acid adenine dinucleotide phosphate (NHD), nicotinamide guanine dinucleotide (NGD) as substrates. Fails to cleave phosphorylated dinucleotides NADP(+), NADPH and NaADP(+). Protects against axonal degeneration following injury. May be involved in the maintenance of axonal integrity. Also functions as a stress-response chaperone protein that prevents toxic aggregation of proteins; this function may be independent of its NAD(+) synthesis activity. The chain is Nicotinamide/nicotinic acid mononucleotide adenylyltransferase 3 from Homo sapiens (Human).